Reading from the N-terminus, the 194-residue chain is Elongation factor P (194 aa).

The protein belongs to the elongation factor P family.

The protein resides in the cytoplasm. It functions in the pathway protein biosynthesis; polypeptide chain elongation. In terms of biological role, involved in peptide bond synthesis. Stimulates efficient translation and peptide-bond synthesis on native or reconstituted 70S ribosomes in vitro. Probably functions indirectly by altering the affinity of the ribosome for aminoacyl-tRNA, thus increasing their reactivity as acceptors for peptidyl transferase. The polypeptide is Elongation factor P (Hydrogenobaculum sp. (strain Y04AAS1)).